A 308-amino-acid chain; its full sequence is GTP cyclohydrolase FolE2 (308 aa).

The protein belongs to the GTP cyclohydrolase IV family.

It catalyses the reaction GTP + H2O = 7,8-dihydroneopterin 3'-triphosphate + formate + H(+). Its pathway is cofactor biosynthesis; 7,8-dihydroneopterin triphosphate biosynthesis; 7,8-dihydroneopterin triphosphate from GTP: step 1/1. Its function is as follows. Converts GTP to 7,8-dihydroneopterin triphosphate. The chain is GTP cyclohydrolase FolE2 from Idiomarina loihiensis (strain ATCC BAA-735 / DSM 15497 / L2-TR).